The sequence spans 273 residues: DnaJ homolog subfamily C member 27 (273 aa).

The segment at 1 to 18 is required for interaction with MAPK1; it reads METNVPKRKEPAKSLRIK. Residues 23–30, 71–75, and 134–137 contribute to the GTP site; these read GNAEVGKS, DMAGH, and NKID. The J domain occupies 217 to 273; that stretch reads DSWEMLGVRPGASREEVNKAYRKLAVLLHPDKCVAPGSEDAFKAVVNARTALLKNIK.

It belongs to the small GTPase superfamily. Rab family. In terms of assembly, interacts directly with MAPK1 (wild-type and kinase-deficient forms). Interacts directly (in GTP-bound form) with MAP2K1 (wild-type and kinase-deficient forms).

The protein resides in the nucleus. Its function is as follows. GTPase which can activate the MEK/ERK pathway and induce cell transformation when overexpressed. May act as a nuclear scaffold for MAPK1, probably by association with MAPK1 nuclear export signal leading to enhanced ERK1/ERK2 signaling. This chain is DnaJ homolog subfamily C member 27 (Dnajc27), found in Mus musculus (Mouse).